The sequence spans 255 residues: Formate hydrogenlyase subunit 7 (255 aa).

Residues cysteine 45, cysteine 51, cysteine 115, and cysteine 145 each contribute to the [4Fe-4S] cluster site.

Belongs to the complex I 20 kDa subunit family. In terms of assembly, FHL comprises of a formate dehydrogenase, unidentified electron carriers and a hydrogenase (isoenzyme 3). In this non-energy conserving pathway molecular hydrogen and carbodioxide from formate are released. The cofactor is [4Fe-4S] cluster.

The chain is Formate hydrogenlyase subunit 7 (hycG) from Escherichia coli (strain K12).